The chain runs to 200 residues: Prostamide/prostaglandin F synthase (200 aa).

Belongs to the peroxiredoxin-like PRXL2 family. Prostamide/prostaglandin F synthase subfamily.

The protein localises to the cytoplasm. It is found in the cytosol. It carries out the reaction prostaglandin H2 + [thioredoxin]-dithiol = prostaglandin F2alpha + [thioredoxin]-disulfide. The catalysed reaction is prostamide F2alpha + [thioredoxin]-disulfide = prostamide H2 + [thioredoxin]-dithiol. Catalyzes the reduction of prostaglandin-ethanolamide H(2) (prostamide H(2)) to prostamide F(2alpha) with NADPH as proton donor. Also able to reduce prostaglandin H(2) to prostaglandin F(2alpha). The chain is Prostamide/prostaglandin F synthase (prxl2b) from Salmo salar (Atlantic salmon).